A 228-amino-acid chain; its full sequence is Interleukin-27 subunit beta (228 aa).

The N-terminal stretch at 1 to 18 is a signal peptide; that stretch reads MSKLLFLSLALWASRSPG. Fibronectin type-III domains follow at residues 26–124 and 127–224; these read ALSQ…VAER and KPDP…VESA. N-linked (GlcNAc...) asparagine glycans are attached at residues Asn54 and Asn104.

It belongs to the type I cytokine receptor family. Type 3 subfamily. In terms of assembly, heterodimer with IL27/IL27A; not disulfide-linked. This heterodimer is known as interleukin IL-27. Heterodimer with IL12A; not disulfide-linked. This heterodimer is known as interleukin IL-35. Interacts with SQSTM1.

The protein resides in the secreted. Functionally, associates with IL27 to form the IL-27 interleukin, a heterodimeric cytokine which functions in innate immunity. IL-27 has pro- and anti-inflammatory properties, that can regulate T-helper cell development, suppress T-cell proliferation, stimulate cytotoxic T-cell activity, induce isotype switching in B-cells, and that has diverse effects on innate immune cells. Among its target cells are CD4 T-helper cells which can differentiate in type 1 effector cells (TH1), type 2 effector cells (TH2) and IL17 producing helper T-cells (TH17). It drives rapid clonal expansion of naive but not memory CD4 T-cells. It also strongly synergizes with IL-12 to trigger interferon-gamma/IFN-gamma production of naive CD4 T-cells, binds to the cytokine receptor WSX-1/TCCR. Another important role of IL-27 is its antitumor activity as well as its antiangiogenic activity with activation of production of antiangiogenic chemokines. In Mus musculus (Mouse), this protein is Interleukin-27 subunit beta (Ebi3).